The sequence spans 446 residues: NADH oxidase (446 aa).

FAD is bound by residues 7–11 (GTNHA), D32, C42, V79, 109–112 (ATGS), K131, and Y158. H10 (proton acceptor) is an active-site residue. The active-site Redox-active is C42. At C42 the chain carries Cysteine sulfinic acid (-SO2H). The NAD(+) site is built by I159, D178, Y187, and G244. Position 282 (D282) interacts with FAD. A298 provides a ligand contact to NAD(+). Residues L299, A300, and S301 each contribute to the FAD site. G329 serves as a coordination point for NAD(+). F427 is a binding site for FAD.

The protein belongs to the class-III pyridine nucleotide-disulfide oxidoreductase family. Homodimer. FAD serves as cofactor.

It catalyses the reaction 2 NADH + O2 + 2 H(+) = 2 NAD(+) + 2 H2O. With respect to regulation, inhibited by hydrogen peroxide, sulfhydryl reagents and quinine, but not by EDTA. Functionally, catalyzes the four-electron reduction of molecular oxygen to water. Active on beta-NADH, but not on alpha-NADH, beta-NADPH or alpha-NADPH. Under aerobic conditions, oxygen acts as the electron acceptor. Under anaerobic conditions, DCIP and MB can replace oxygen as the electron acceptor. This is NADH oxidase from Lactococcus lactis subsp. cremoris (strain MG1363).